Reading from the N-terminus, the 274-residue chain is Nitrogenase iron protein (274 aa).

Residue 8–15 participates in ATP binding; that stretch reads GKGGIGKS. [4Fe-4S] cluster is bound at residue C94. At R97 the chain carries ADP-ribosylarginine; by dinitrogenase reductase ADP-ribosyltransferase. C131 provides a ligand contact to [4Fe-4S] cluster.

It belongs to the NifH/BchL/ChlL family. As to quaternary structure, homodimer. [4Fe-4S] cluster serves as cofactor. In terms of processing, the reversible ADP-ribosylation of Arg-97 inactivates the nitrogenase reductase and regulates nitrogenase activity.

It carries out the reaction N2 + 8 reduced [2Fe-2S]-[ferredoxin] + 16 ATP + 16 H2O = H2 + 8 oxidized [2Fe-2S]-[ferredoxin] + 2 NH4(+) + 16 ADP + 16 phosphate + 6 H(+). The key enzymatic reactions in nitrogen fixation are catalyzed by the nitrogenase complex, which has 2 components: the iron protein and the molybdenum-iron protein. The protein is Nitrogenase iron protein of Chlorobium phaeobacteroides (strain DSM 266 / SMG 266 / 2430).